The primary structure comprises 343 residues: Lipopolysaccharide core biosynthesis glycosyltransferase LpsD (343 aa).

This sequence belongs to the glycosyltransferase group 1 family. Glycosyltransferase 4 subfamily.

The protein operates within bacterial outer membrane biogenesis; LPS core biosynthesis. The protein is Lipopolysaccharide core biosynthesis glycosyltransferase LpsD (lpsD) of Rhizobium meliloti (strain 1021) (Ensifer meliloti).